A 233-amino-acid chain; its full sequence is 2-phytyl-1,4-naphtoquinone methyltransferase (233 aa).

The protein belongs to the class I-like SAM-binding methyltransferase superfamily. MenG/UbiE family.

It catalyses the reaction demethylphylloquinol + S-adenosyl-L-methionine = phylloquinol + S-adenosyl-L-homocysteine + H(+). Its pathway is cofactor biosynthesis; phylloquinone biosynthesis. Its function is as follows. Methyltransferase required for the conversion of 2-phytyl-1,4-beta-naphthoquinol to phylloquinol. The sequence is that of 2-phytyl-1,4-naphtoquinone methyltransferase from Synechococcus elongatus (strain ATCC 33912 / PCC 7942 / FACHB-805) (Anacystis nidulans R2).